A 346-amino-acid chain; its full sequence is tRNA N6-adenosine threonylcarbamoyltransferase (346 aa).

Positions 111 and 115 each coordinate Fe cation. Substrate is bound by residues 134-138, D167, G180, and N279; that span reads LVSGG. A Fe cation-binding site is contributed by D307.

This sequence belongs to the KAE1 / TsaD family. Requires Fe(2+) as cofactor.

Its subcellular location is the cytoplasm. The enzyme catalyses L-threonylcarbamoyladenylate + adenosine(37) in tRNA = N(6)-L-threonylcarbamoyladenosine(37) in tRNA + AMP + H(+). Functionally, required for the formation of a threonylcarbamoyl group on adenosine at position 37 (t(6)A37) in tRNAs that read codons beginning with adenine. Is involved in the transfer of the threonylcarbamoyl moiety of threonylcarbamoyl-AMP (TC-AMP) to the N6 group of A37, together with TsaE and TsaB. TsaD likely plays a direct catalytic role in this reaction. This chain is tRNA N6-adenosine threonylcarbamoyltransferase, found in Burkholderia ambifaria (strain MC40-6).